Here is a 517-residue protein sequence, read N- to C-terminus: Beclin-1-like protein (517 aa).

The tract at residues 76 to 106 is disordered; it reads LPRHKPPQSQGIPPRPRGASSPQPDATQSGK. A compositionally biased stretch (polar residues) spans 95–105; the sequence is SSPQPDATQSG. The stretch at 172–266 forms a coiled coil; that stretch reads CLECMRVLSD…NRFNELEDRY (95 aa).

The protein belongs to the beclin family. In terms of assembly, component of a phosphatidylinositol 3-kinase (PI3K) complex composed of ATG6, SH3P2 and FREE1. Interacts with SINAT1, SINAT2, SINAT5, SINAT6, TRAF1A and TRAF1B. Interacts with TUBB8/TUB8. Component of a complex made of VPS38/USL1 and PI3K main subunits such as VPS15, ATG6/VPS30 and VPS34. Binds directly to VPS38/USL1. Post-translationally, ubiquitinated. The interaction with SINAT1 or SINAT2, and the presence of TRAF1A/MUSE14 and TRAF1B/MUSE13, mediates its proteasome-dependent degradation. Highly expressed in mature pollen grains. Expressed in roots, leaves, stems, flowers and siliques.

The protein resides in the cytoplasm. Its subcellular location is the cytoskeleton. Functionally, required for normal plant development. Required for pollen germination. Required for autophagic activity. Required to limit the pathogen-associated cell death response. May be involved in vacuolar protein sorting. Binds to microtubules. May facilitate efficient recruitment of other ATG proteins to assemble scaffolds for autophagosome biogenesis. This chain is Beclin-1-like protein, found in Arabidopsis thaliana (Mouse-ear cress).